A 411-amino-acid polypeptide reads, in one-letter code: Carbohydrate sulfotransferase 1 (411 aa).

Residues 1–2 (MQ) are Cytoplasmic-facing. The chain crosses the membrane as a helical; Signal-anchor for type II membrane protein span at residues 3 to 23 (CSWKAVLLLALASIAIQYTAI). The Lumenal portion of the chain corresponds to 24–411 (RTFTAKSFHT…VEERDFRPFS (388 aa)). Asn-56 carries N-linked (GlcNAc...) asparagine glycosylation. 69–75 (TRSGSSF) serves as a coordination point for 3'-phosphoadenylyl sulfate. Asn-145 and Asn-189 each carry an N-linked (GlcNAc...) asparagine glycan. Residue 234 to 242 (RDPRGILAS) coordinates 3'-phosphoadenylyl sulfate. A glycan (N-linked (GlcNAc...) asparagine) is linked at Asn-334. Positions 337-339 (RGD) match the Cell attachment site motif.

This sequence belongs to the sulfotransferase 1 family. Gal/GlcNAc/GalNAc subfamily. As to expression, widely expressed at low level. Expressed in brain and skeletal muscle. Expressed by high endothelial cells (HEVs) and leukocytes.

The protein resides in the golgi apparatus membrane. The enzyme catalyses 3'-phosphoadenylyl sulfate + keratan = adenosine 3',5'-bisphosphate + keratan 6'-sulfate.. The protein operates within glycan metabolism. Sulfotransferase that utilizes 3'-phospho-5'-adenylyl sulfate (PAPS) as sulfonate donor to catalyze the transfer of sulfate to position 6 of internal galactose (Gal) residues of keratan. Cooperates with B4GALT4 and B3GNT7 glycosyltransferases and CHST6 sulfotransferase to construct and elongate disulfated disaccharide unit [-&gt;3(6-sulfoGalbeta)1-&gt;4(6-sulfoGlcNAcbeta)1-&gt;] within keratan sulfate polymer. Has a preference for sulfating keratan sulfate, but it also transfers sulfate to the unsulfated polymer. Involved in biosynthesis of phosphacan, a major keratan sulfate proteoglycan in the developing brain. Involved in biosynthesis of 6-sulfoGalbeta-containing O-linked glycans in high endothelial venules of lymph nodes. May act in a synergistic manner with CHST4 to generate sialyl 6',6-disulfo Lewis X motif, a recognition determinant for immune cell receptors implicated in leukocyte trafficking. Catalyzes sulfation of N-acetyllactosamine (LacNAc) oligosaccharides with highest efficiency for sialylated LacNAc structures. The chain is Carbohydrate sulfotransferase 1 from Homo sapiens (Human).